A 202-amino-acid chain; its full sequence is Protease (202 aa).

Catalysis depends on residues histidine 55, aspartate 72, and cysteine 122.

Belongs to the peptidase C5 family. In terms of assembly, interacts with protease cofactor pVI-C; this interaction is necessary for protease activation.

Its subcellular location is the virion. It localises to the host nucleus. It catalyses the reaction Cleaves proteins of the adenovirus and its host cell at two consensus sites: -Yaa-Xaa-Gly-Gly-|-Xaa- and -Yaa-Xaa-Gly-Xaa-|-Gly- (in which Yaa is Met, Ile or Leu, and Xaa is any amino acid).. With respect to regulation, requires DNA and protease cofactor for maximal activation. Inside nascent virions, becomes partially activated by binding to the viral DNA, allowing it to cleave the cofactor that binds to the protease and fully activates it. Actin, like the viral protease cofactor, seems to act as a cofactor in the cleavage of cytokeratin 18 and of actin itself. Its function is as follows. Cleaves viral precursor proteins (pTP, pIIIa, pVI, pVII, pVIII, and pX) inside newly assembled particles giving rise to mature virions. Protease complexed to its cofactor slides along the viral DNA to specifically locate and cleave the viral precursors. Mature virions have a weakened organization compared to the unmature virions, thereby facilitating subsequent uncoating. Without maturation, the particle lacks infectivity and is unable to uncoat. Late in adenovirus infection, in the cytoplasm, may participate in the cytoskeleton destruction. Cleaves host cell cytoskeletal keratins K7 and K18. This chain is Protease, found in Bovine adenovirus 7 (BAdV-7).